A 574-amino-acid polypeptide reads, in one-letter code: Avenacosidase 1 (574 aa).

A chloroplast-targeting transit peptide spans 1–55; it reads MALLCSALSNSTHPSFRSHIGANSENLWHLSADPAQKSKRRCNLTLSSRAARISS. Residues Gln88, His192, and 237–238 contribute to the a beta-D-glucoside site; that span reads NE. Residue Glu238 is the Proton donor of the active site. Cysteines 258 and 264 form a disulfide. A beta-D-glucoside is bound by residues Tyr381, Glu454, Trp505, 512–513, and Phe521; that span reads EW. Residue Glu454 is the Nucleophile of the active site.

This sequence belongs to the glycosyl hydrolase 1 family. As to quaternary structure, homo- and heteromultimer with P60B in a 1:1 stoichiometry. Aggregates to form the fibrillar stromacentre. In terms of tissue distribution, expressed in caryopses, coleoptiles, primary leaves, and etiolated and green seedlings, but not in roots.

It is found in the plastid. The protein resides in the chloroplast stroma. It carries out the reaction avenacoside B + H2O = 26-desgluco-avenacoside B + D-glucose. With respect to regulation, inhibited by N-(3-Dimethylaminopropyl)-N'-ethylcarbodiimide hydrochloride (EDC). Functionally, beta-glucosidase acting as a preformed defense system. Hydrolyzes the bisdesmosides avenacosides A and B to 26-desgluco-avenacosides exhibiting fungicidal activity. Can use beta-fucoside &gt; beta-glucoside &gt; beta-galactoside &gt; beta-xyloside as substrates, but not alpha-glycosides, beta-thioglucosides and disaccharides. This Avena sativa (Oat) protein is Avenacosidase 1 (P60A).